Consider the following 511-residue polypeptide: MSNTKDVDADASNLLASLSVSKEKKEDTSNILAGLSLNGDESNKKEGSGVKDTESDKQKGNGKVEKVEKDENKDKSQSEAKDDSKRETNLIENRYEVEVKLDDIQADPNSPLYSVKSFEELGLKPELLKGLYAMKFNKPSKIQERALPLLISNPPKNMIGQSQSGTGKTAAFSLTMLSRVDESIKAPQCICLAPTRELARQTLEVVETMGKYSNITYQLVVPDSVPRGQAISAQVLVGTPGIVHDLINRKAINVAKVKVFVLDEADNMLDAQGLADTCLRVKKRLPRDCQLVLFSATFPTEVRKYAEKFVPNANSLALKQEELNVKGIKQLYMDCKNQEHKFEVLCELYGLLTIGSSIIFVEQKATADSLYLRMKEEGHTVSILHGGLEVADRDRLIDDFREGRSKVLITTNVLARGIDIATVSMVVNYDLPRTKEGRPDPSTYLHRIGRTGRFGRVGVSVSFVANEKDYQTLKYIAEYFGIEDQMTVVPTDDWDEVEKIVTRVIKEKKMT.

The interval 18–89 is disordered; the sequence is LSVSKEKKED…AKDDSKRETN (72 aa). Residues 41 to 89 are compositionally biased toward basic and acidic residues; sequence ESNKKEGSGVKDTESDKQKGNGKVEKVEKDENKDKSQSEAKDDSKRETN. The short motif at 116-144 is the Q motif element; that stretch reads KSFEELGLKPELLKGLYAMKFNKPSKIQE. One can recognise a Helicase ATP-binding domain in the interval 149–316; the sequence is LLISNPPKNM…EKFVPNANSL (168 aa). 162-169 lines the ATP pocket; that stretch reads SQSGTGKT. A DEAD box motif is present at residues 263-266; it reads DEAD. Residues 327–495 enclose the Helicase C-terminal domain; that stretch reads GIKQLYMDCK…MTVVPTDDWD (169 aa).

The protein belongs to the DEAD box helicase family. DDX19/DBP5 subfamily. As to quaternary structure, associates with the nuclear pore complex.

Its subcellular location is the cytoplasm. The protein resides in the nucleus. The protein localises to the nuclear pore complex. It localises to the nucleus membrane. It carries out the reaction ATP + H2O = ADP + phosphate + H(+). Functionally, ATP-dependent RNA helicase associated with the nuclear pore complex and essential for mRNA export from the nucleus. May participate in a terminal step of mRNA export through the removal of proteins that accompany mRNA through the nucleopore complex. May also be involved in early transcription. In Lodderomyces elongisporus (strain ATCC 11503 / CBS 2605 / JCM 1781 / NBRC 1676 / NRRL YB-4239) (Yeast), this protein is ATP-dependent RNA helicase DBP5 (DBP5).